A 72-amino-acid polypeptide reads, in one-letter code: Gas vesicle protein A (72 aa).

The protein belongs to the gas vesicle GvpA family. In terms of assembly, the gas vesicle shell is 2 nm thick and consists of a single layer of this protein. It forms helical ribs nearly perpendicular to the long axis of the vesicle.

It is found in the gas vesicle shell. Its function is as follows. Gas vesicles are hollow, gas filled proteinaceous nanostructures found in some microorganisms. During planktonic growth they allow positioning of the organism at a favorable depth for light or nutrient acquisition. GvpA forms the protein shell. This chain is Gas vesicle protein A, found in Pseudanabaena galeata (strain PCC 6901).